The following is a 540-amino-acid chain: MRVNNGLTPQELEAYGISDVHDIVYNPSYDLLYQEELDPSLTGYERGVLTNLGAVAVDTGIFTGRSPKDKYIVRDDTTRDTFWWADKGKGKNDNKPLSPETWQHLKGLVTRQLSGKRLFVVDAFCGANPDTRLSVRFITEVAWQAHFVKNMFIRPSDEELAGFKPDFIVMNGAKCTNPQWKEQGLNSENFVAFNLTERMQLIGGTWYGGEMKKGMFSMMNYLLPLKGIASMHCSANVGEKGDVAVFFGLSGTGKTTLSTDPKRRLIGDDEHGWDDDGVFNFEGGCYAKTIKLSKEAEPEIYNAIRRDALLENVTVREDGTIDFDDGSKTENTRVSYPIYHIDNIVKPVSKAGHATKVIFLTADAFGVLPPVSRLTADQTQYHFLSGFTAKLAGTERGITEPTPTFSACFGAAFLSLHPTQYAEVLVKRMQAAGAQAYLVNTGWNGTGKRISIKDTRAIIDAILNGSLDNAETFTLPMFNLAIPTELPGVDTKLLDPRNTYASPEQWQEKAETLAKLFIDNFDKYTDTPAGAALVAAGPKL.

Position 65 (Arg-65) interacts with substrate. N6-acetyllysine is present on Lys-87. Substrate contacts are provided by Tyr-207 and Lys-213. Residues Lys-213, His-232, and 248 to 256 (GLSGTGKTT) each bind ATP. Positions 213 and 232 each coordinate Mn(2+). Residue Asp-269 participates in Mn(2+) binding. Residues Glu-297, Arg-333, 449–450 (RI), and Thr-455 each bind ATP. Arg-333 contacts substrate. An N6-acetyllysine modification is found at Lys-523.

It belongs to the phosphoenolpyruvate carboxykinase (ATP) family. Monomer. It depends on Mn(2+) as a cofactor.

It localises to the cytoplasm. The enzyme catalyses oxaloacetate + ATP = phosphoenolpyruvate + ADP + CO2. Its pathway is carbohydrate biosynthesis; gluconeogenesis. In terms of biological role, involved in the gluconeogenesis. Catalyzes the conversion of oxaloacetate (OAA) to phosphoenolpyruvate (PEP) through direct phosphoryl transfer between the nucleoside triphosphate and OAA. This is Phosphoenolpyruvate carboxykinase (ATP) from Escherichia coli O6:H1 (strain CFT073 / ATCC 700928 / UPEC).